The primary structure comprises 100 residues: Large ribosomal subunit protein uL23 (100 aa).

This sequence belongs to the universal ribosomal protein uL23 family. Part of the 50S ribosomal subunit. Contacts protein L29, and trigger factor when it is bound to the ribosome.

One of the early assembly proteins it binds 23S rRNA. One of the proteins that surrounds the polypeptide exit tunnel on the outside of the ribosome. Forms the main docking site for trigger factor binding to the ribosome. The chain is Large ribosomal subunit protein uL23 from Thermotoga neapolitana (strain ATCC 49049 / DSM 4359 / NBRC 107923 / NS-E).